The following is a 548-amino-acid chain: MKNINPSQTAAWKALQQHFEQMKDVTISSLFAKDDQRFNRFSATFDDQMLVDFSKNRITSETLEKLQDLAKETDLAGAIKSMFSGEKINRTEDRAVLHIALRNRSNTPIVVDGKDVMPEVNAVLAKMKQFCDRVISGDWKGYTGKAITDVVNIGIGGSDLGPYMVTEALRPYKNHLNMHFVSNVDGTHIAEALKPLNPETTLFLVASKTFTTQETMTNAHSARDWFLSAAGDPAHVAKHFAALSTNAKAVGEFGIDTNNMFEFWDWVGGRYSLWSAIGLSIALSVGFEHFEQLLSGAHAMDKHFAETPAEKNLPVLLALIGIWYNNFFGAETEAILPYDQYMHRFPAYFQQGNMESNGKYVDRNGHPVDYQTGPIIWGEPGTNGQHAFYQLIHQGTKLIPCDFIAPAISHNPLSDHHAKLLSNFFAQTEALAFGKSLEDVEAEFAAAGKTPEQVAHVAPFKVFEGNRPTNSILLREITPFSLGALIALYEHKIFTQGVILNIYTFDQWGVELGKQLANRILPELADDQEVTSHDSSTNALINRFKNWR.

Glutamate 355 functions as the Proton donor in the catalytic mechanism. Catalysis depends on residues histidine 386 and lysine 514.

The protein belongs to the GPI family.

It localises to the cytoplasm. It carries out the reaction alpha-D-glucose 6-phosphate = beta-D-fructose 6-phosphate. Its pathway is carbohydrate biosynthesis; gluconeogenesis. The protein operates within carbohydrate degradation; glycolysis; D-glyceraldehyde 3-phosphate and glycerone phosphate from D-glucose: step 2/4. Its function is as follows. Catalyzes the reversible isomerization of glucose-6-phosphate to fructose-6-phosphate. This is Glucose-6-phosphate isomerase from Yersinia pestis (strain Pestoides F).